The following is a 431-amino-acid chain: MTSTVESLSSVKKKISFEIPADRVTSEIDKVFEKIRKRAAIKGFRKGKAPQSLIEKHYADVMEGDVLKNLFEETYFKALAEHKIFPVSHPVIDSDEIKRGTPFTYSATVEVLPEIDVKDYNGLEVAKETFTPDESIVEKRLQEMRENMSHLRSLEEGSVAEDGHFAVIDFTGYVDGVPFEGGSAESYQLELGSGRFIPGFEEQIVGMKTGESKSMSLNFPEDYWNKDLAGKEARFDVILSEIKVKELPELNDEFAAQMGEFDTITQLRDKIAELYEKQENDRIKADLQDRVVQALIEKNEIEVPSTLVDRQLQTMLANAQNRLAQQRLTFEMMGMNEESFKAQYRTVAENQVKGSLLLEAVAKKEGISVEEADIEKKLLEIAGGNEEELGRVKSFYEQNRAARENLVAHLAEEKVMSFLLGSAVISEKTKE.

Residues 163–248 (GHFAVIDFTG…LSEIKVKELP (86 aa)) form the PPIase FKBP-type domain.

This sequence belongs to the FKBP-type PPIase family. Tig subfamily.

It is found in the cytoplasm. It carries out the reaction [protein]-peptidylproline (omega=180) = [protein]-peptidylproline (omega=0). Involved in protein export. Acts as a chaperone by maintaining the newly synthesized protein in an open conformation. Functions as a peptidyl-prolyl cis-trans isomerase. The protein is Trigger factor of Geobacter sulfurreducens (strain ATCC 51573 / DSM 12127 / PCA).